The sequence spans 604 residues: Threonine--tRNA ligase (604 aa).

The catalytic stretch occupies residues 210-501; that stretch reads DHRKIGTEME…LTEHYAGEFP (292 aa). 3 residues coordinate Zn(2+): Cys-302, His-353, and His-478.

The protein belongs to the class-II aminoacyl-tRNA synthetase family. In terms of assembly, homodimer. Zn(2+) serves as cofactor.

The protein resides in the cytoplasm. The enzyme catalyses tRNA(Thr) + L-threonine + ATP = L-threonyl-tRNA(Thr) + AMP + diphosphate + H(+). Functionally, catalyzes the attachment of threonine to tRNA(Thr) in a two-step reaction: L-threonine is first activated by ATP to form Thr-AMP and then transferred to the acceptor end of tRNA(Thr). Also edits incorrectly charged L-seryl-tRNA(Thr). The protein is Threonine--tRNA ligase of Sulfurovum sp. (strain NBC37-1).